A 393-amino-acid polypeptide reads, in one-letter code: Formate-dependent phosphoribosylglycinamide formyltransferase (393 aa).

Residues 22–23 and E82 each bind N(1)-(5-phospho-beta-D-ribosyl)glycinamide; that span reads EL. ATP-binding positions include R114, K155, 160–165, 195–198, and E203; these read SSGKGQ and EGFV. Residues 119-308 form the ATP-grasp domain; that stretch reads RLAAEELGLP…EFALHVRAIL (190 aa). Residues E267 and E279 each coordinate Mg(2+). Residues D286, K356, and 363–364 each bind N(1)-(5-phospho-beta-D-ribosyl)glycinamide; that span reads RR.

This sequence belongs to the PurK/PurT family. Homodimer.

It catalyses the reaction N(1)-(5-phospho-beta-D-ribosyl)glycinamide + formate + ATP = N(2)-formyl-N(1)-(5-phospho-beta-D-ribosyl)glycinamide + ADP + phosphate + H(+). Its pathway is purine metabolism; IMP biosynthesis via de novo pathway; N(2)-formyl-N(1)-(5-phospho-D-ribosyl)glycinamide from N(1)-(5-phospho-D-ribosyl)glycinamide (formate route): step 1/1. Functionally, involved in the de novo purine biosynthesis. Catalyzes the transfer of formate to 5-phospho-ribosyl-glycinamide (GAR), producing 5-phospho-ribosyl-N-formylglycinamide (FGAR). Formate is provided by PurU via hydrolysis of 10-formyl-tetrahydrofolate. The protein is Formate-dependent phosphoribosylglycinamide formyltransferase of Nitratidesulfovibrio vulgaris (strain ATCC 29579 / DSM 644 / CCUG 34227 / NCIMB 8303 / VKM B-1760 / Hildenborough) (Desulfovibrio vulgaris).